We begin with the raw amino-acid sequence, 107 residues long: Large ribosomal subunit protein eL33A (107 aa).

An N-acetylalanine; partial modification is found at A2. Residue K47 forms a Glycyl lysine isopeptide (Lys-Gly) (interchain with G-Cter in ubiquitin) linkage.

This sequence belongs to the eukaryotic ribosomal protein eL33 family. In terms of assembly, component of the large ribosomal subunit (LSU). Mature yeast ribosomes consist of a small (40S) and a large (60S) subunit. The 40S small subunit contains 1 molecule of ribosomal RNA (18S rRNA) and 33 different proteins (encoded by 57 genes). The large 60S subunit contains 3 rRNA molecules (25S, 5.8S and 5S rRNA) and 46 different proteins (encoded by 81 genes). Post-translationally, N-terminally acetylated by acetyltransferase NatA.

The protein resides in the cytoplasm. Its function is as follows. Component of the ribosome, a large ribonucleoprotein complex responsible for the synthesis of proteins in the cell. The small ribosomal subunit (SSU) binds messenger RNAs (mRNAs) and translates the encoded message by selecting cognate aminoacyl-transfer RNA (tRNA) molecules. The large subunit (LSU) contains the ribosomal catalytic site termed the peptidyl transferase center (PTC), which catalyzes the formation of peptide bonds, thereby polymerizing the amino acids delivered by tRNAs into a polypeptide chain. The nascent polypeptides leave the ribosome through a tunnel in the LSU and interact with protein factors that function in enzymatic processing, targeting, and the membrane insertion of nascent chains at the exit of the ribosomal tunnel. The protein is Large ribosomal subunit protein eL33A of Saccharomyces cerevisiae (strain ATCC 204508 / S288c) (Baker's yeast).